We begin with the raw amino-acid sequence, 146 residues long: Large ribosomal subunit protein uL24z (146 aa).

2 disordered regions span residues methionine 1–arginine 26 and lysine 121–aspartate 146. Residues serine 9 to histidine 18 are compositionally biased toward basic residues. The segment covering lysine 121–serine 138 has biased composition (basic and acidic residues).

The protein belongs to the universal ribosomal protein uL24 family.

This is Large ribosomal subunit protein uL24z (RPL26A) from Arabidopsis thaliana (Mouse-ear cress).